The following is a 44-amino-acid chain: Hyaluronidase CdtHya1 (44 aa).

The protein belongs to the glycosyl hydrolase 56 family. As to quaternary structure, monomer. Post-translationally, contains disulfide bonds. Glycosylated. As to expression, expressed by the venom gland.

The protein localises to the secreted. The catalysed reaction is Random hydrolysis of (1-&gt;4)-linkages between N-acetyl-beta-D-glucosamine and D-glucuronate residues in hyaluronate.. Functionally, snake venom endo-hyaluronidase that degrades hyaluronan to smaller oligosaccharide fragments. In venom, it is not toxic by itself, but increases the diffusion of other venom proteins such as crotoxin (a neurotoxic and myotoxic PLA2) by degrading the extracellular matrix. In addition, it displays antiedematogenic activity, since it significantly diminishes the oedematogenic activity of crotoxin (probably by direct substrate hydrolysis, since hyaluronan possesses strong water-binding capacity). The protein is Hyaluronidase CdtHya1 of Crotalus durissus terrificus (South American rattlesnake).